Reading from the N-terminus, the 166-residue chain is Coiled-coil domain-containing protein 12 (166 aa).

The residue at position 1 (M1) is an N-acetylmethionine. The disordered stretch occupies residues 1–56 (MEATTAGVGRLEEEALRRKERLKALREKTGRKDKEDGEPKTKHLREEEEEGEKHRE). Residues 8-28 (VGRLEEEALRRKERLKALREK) are a coiled coil. The segment covering 10-56 (RLEEEALRRKERLKALREKTGRKDKEDGEPKTKHLREEEEEGEKHRE) has biased composition (basic and acidic residues). An N6-acetyllysine modification is found at K53. K94 participates in a covalent cross-link: Glycyl lysine isopeptide (Lys-Gly) (interchain with G-Cter in SUMO2). Positions 117-144 (KRDVAKKLEKLKKRTQRAIAELIRERLK) form a coiled coil. A disordered region spans residues 147–166 (EDSLASAVDAATEQKTCDSD). Residues S149 and S165 each carry the phosphoserine modification.

This Homo sapiens (Human) protein is Coiled-coil domain-containing protein 12 (CCDC12).